Here is a 209-residue protein sequence, read N- to C-terminus: Thiamine-phosphate synthase (209 aa).

4-amino-2-methyl-5-(diphosphooxymethyl)pyrimidine contacts are provided by residues Q38–K42 and N70. Residues D71 and D90 each coordinate Mg(2+). S109 provides a ligand contact to 4-amino-2-methyl-5-(diphosphooxymethyl)pyrimidine. 2-[(2R,5Z)-2-carboxy-4-methylthiazol-5(2H)-ylidene]ethyl phosphate is bound at residue T135–T137. Residue K138 coordinates 4-amino-2-methyl-5-(diphosphooxymethyl)pyrimidine. 2-[(2R,5Z)-2-carboxy-4-methylthiazol-5(2H)-ylidene]ethyl phosphate-binding positions include G166 and I186–S187.

The protein belongs to the thiamine-phosphate synthase family. It depends on Mg(2+) as a cofactor.

It catalyses the reaction 2-[(2R,5Z)-2-carboxy-4-methylthiazol-5(2H)-ylidene]ethyl phosphate + 4-amino-2-methyl-5-(diphosphooxymethyl)pyrimidine + 2 H(+) = thiamine phosphate + CO2 + diphosphate. The enzyme catalyses 2-(2-carboxy-4-methylthiazol-5-yl)ethyl phosphate + 4-amino-2-methyl-5-(diphosphooxymethyl)pyrimidine + 2 H(+) = thiamine phosphate + CO2 + diphosphate. It carries out the reaction 4-methyl-5-(2-phosphooxyethyl)-thiazole + 4-amino-2-methyl-5-(diphosphooxymethyl)pyrimidine + H(+) = thiamine phosphate + diphosphate. Its pathway is cofactor biosynthesis; thiamine diphosphate biosynthesis; thiamine phosphate from 4-amino-2-methyl-5-diphosphomethylpyrimidine and 4-methyl-5-(2-phosphoethyl)-thiazole: step 1/1. Its function is as follows. Condenses 4-methyl-5-(beta-hydroxyethyl)thiazole monophosphate (THZ-P) and 2-methyl-4-amino-5-hydroxymethyl pyrimidine pyrophosphate (HMP-PP) to form thiamine monophosphate (TMP). The protein is Thiamine-phosphate synthase of Syntrophomonas wolfei subsp. wolfei (strain DSM 2245B / Goettingen).